We begin with the raw amino-acid sequence, 217 residues long: Elongation factor Ts (217 aa).

Residues 82–85 form an involved in Mg(2+) ion dislocation from EF-Tu region; that stretch reads TDFV.

This sequence belongs to the EF-Ts family.

It is found in the cytoplasm. In terms of biological role, associates with the EF-Tu.GDP complex and induces the exchange of GDP to GTP. It remains bound to the aminoacyl-tRNA.EF-Tu.GTP complex up to the GTP hydrolysis stage on the ribosome. This is Elongation factor Ts from Synechococcus sp. (strain RCC307).